The chain runs to 484 residues: Aspartyl/glutamyl-tRNA(Asn/Gln) amidotransferase subunit B (484 aa).

The protein belongs to the GatB/GatE family. GatB subfamily. In terms of assembly, heterotrimer of A, B and C subunits.

The enzyme catalyses L-glutamyl-tRNA(Gln) + L-glutamine + ATP + H2O = L-glutaminyl-tRNA(Gln) + L-glutamate + ADP + phosphate + H(+). The catalysed reaction is L-aspartyl-tRNA(Asn) + L-glutamine + ATP + H2O = L-asparaginyl-tRNA(Asn) + L-glutamate + ADP + phosphate + 2 H(+). Allows the formation of correctly charged Asn-tRNA(Asn) or Gln-tRNA(Gln) through the transamidation of misacylated Asp-tRNA(Asn) or Glu-tRNA(Gln) in organisms which lack either or both of asparaginyl-tRNA or glutaminyl-tRNA synthetases. The reaction takes place in the presence of glutamine and ATP through an activated phospho-Asp-tRNA(Asn) or phospho-Glu-tRNA(Gln). The protein is Aspartyl/glutamyl-tRNA(Asn/Gln) amidotransferase subunit B of Bordetella pertussis (strain Tohama I / ATCC BAA-589 / NCTC 13251).